Reading from the N-terminus, the 558-residue chain is Leucine-rich repeat-containing protein 71 (558 aa).

Low complexity predominate over residues 1–18; it reads MSSEPSTTGTSPRTPRPG. 2 disordered regions span residues 1-55 and 86-112; these read MSSE…NPEE and RVQQ…SASC. Basic and acidic residues predominate over residues 28 to 38; sequence KKGDRAAKDKT. The segment covering 86-99 has biased composition (polar residues); that stretch reads RVQQSSVPSASTSE. 4 LRR repeats span residues 196–216, 221–241, 253–274, and 281–302; these read TLRK…SKLM, TIVH…QLLG, TLVS…YIAD, and SLLW…KLAE. The segment at 325 to 415 is disordered; that stretch reads GTQERSRSPS…DAAKAGKGKV (91 aa). 2 stretches are compositionally biased toward basic and acidic residues: residues 339 to 348 and 380 to 391; these read GDSKAEREKS and KTGEVVKKEEKL.

This Mus musculus (Mouse) protein is Leucine-rich repeat-containing protein 71 (Lrrc71).